A 460-amino-acid polypeptide reads, in one-letter code: Allantoinase (460 aa).

Zn(2+) contacts are provided by His-70, His-72, Lys-157, His-193, His-250, and Asp-323. Lys-157 carries the post-translational modification N6-carboxylysine.

The protein belongs to the metallo-dependent hydrolases superfamily. Allantoinase family. As to quaternary structure, homotetramer. Zn(2+) is required as a cofactor. Post-translationally, carboxylation allows a single lysine to coordinate two zinc ions.

It carries out the reaction (S)-allantoin + H2O = allantoate + H(+). It functions in the pathway nitrogen metabolism; (S)-allantoin degradation; allantoate from (S)-allantoin: step 1/1. Functionally, catalyzes the conversion of allantoin (5-ureidohydantoin) to allantoic acid by hydrolytic cleavage of the five-member hydantoin ring. Involved in the utilization of purines as secondary nitrogen sources, when primary sources are limiting. The sequence is that of Allantoinase (DAL1) from Saccharomyces cerevisiae (strain ATCC 204508 / S288c) (Baker's yeast).